We begin with the raw amino-acid sequence, 171 residues long: ATP synthase subunit b (171 aa).

Residues 2–22 (FVVKMVLGFLILLSPLCATGL) traverse the membrane as a helical segment.

It belongs to the ATPase B chain family. F-type ATPases have 2 components, F(1) - the catalytic core - and F(0) - the membrane proton channel. F(1) has five subunits: alpha(3), beta(3), gamma(1), delta(1), epsilon(1). F(0) has three main subunits: a(1), b(2) and c(10-14). The alpha and beta chains form an alternating ring which encloses part of the gamma chain. F(1) is attached to F(0) by a central stalk formed by the gamma and epsilon chains, while a peripheral stalk is formed by the delta and b chains.

It localises to the cell inner membrane. In terms of biological role, f(1)F(0) ATP synthase produces ATP from ADP in the presence of a proton or sodium gradient. F-type ATPases consist of two structural domains, F(1) containing the extramembraneous catalytic core and F(0) containing the membrane proton channel, linked together by a central stalk and a peripheral stalk. During catalysis, ATP synthesis in the catalytic domain of F(1) is coupled via a rotary mechanism of the central stalk subunits to proton translocation. Component of the F(0) channel, it forms part of the peripheral stalk, linking F(1) to F(0). The polypeptide is ATP synthase subunit b (Helicobacter pylori (strain G27)).